The primary structure comprises 114 residues: Ribonuclease U2 (114 aa).

3 cysteine pairs are disulfide-bonded: Cys1–Cys54, Cys9–Cys113, and Cys55–Cys96. Positions 29, 30, 31, 32, 37, and 39 each coordinate Ca(2+). 39–49 (YPHQYYDEASE) serves as a coordination point for substrate. Residue His41 is part of the active site. The active-site Proton acceptor is the Glu62. Arg85 is a binding site for substrate. His101 serves as the catalytic Proton donor. Substrate is bound at residue 108 to 110 (DGF).

Belongs to the ribonuclease U2 family.

The enzyme catalyses [RNA] containing adenosine + H2O = an [RNA fragment]-3'-adenosine-3'-phosphate + a 5'-hydroxy-ribonucleotide-3'-[RNA fragment].. It catalyses the reaction [RNA] containing guanosine + H2O = an [RNA fragment]-3'-guanosine-3'-phosphate + a 5'-hydroxy-ribonucleotide-3'-[RNA fragment].. The polypeptide is Ribonuclease U2 (RNU2) (Ustilago sphaerogena (Smut fungus)).